The following is a 307-amino-acid chain: Polysialic acid O-acetyltransferase (307 aa).

Positions 1 to 90 (MLRLKTQDSR…LKTQDSRLKT (90 aa)) are enriched in basic and acidic residues. The disordered stretch occupies residues 1–95 (MLRLKTQDSR…SRLKTQDSFS (95 aa)). 13 repeat units span residues 3–9 (RLKTQDS), 10–16 (RLKTQDS), 17–23 (RLKTQDS), 24–30 (RLKTQDS), 31–37 (RLKTQDS), 38–44 (RLKTQDS), 45–51 (RLKTQDS), 52–58 (RLKTQDS), 59–65 (RLKTQDS), 66–72 (RLKTQDS), 73–79 (RLKTQDS), 80–86 (RLKTQDS), and 87–93 (RLKTQDS). Residues 3–93 (RLKTQDSRLK…QDSRLKTQDS (91 aa)) are 13 X 7 AA tandem repeat of RLKTQDS encoded by a 7 nucleotide repeat. Acetyl-CoA is bound by residues 208–210 (DGH), arginine 237, lysine 243, lysine 261, and lysine 278.

Belongs to the transferase hexapeptide repeat family. As to quaternary structure, homotrimer. Hexamer formed by two homotrimers.

The catalysed reaction is [N-acetyl-alpha-D-neuraminosyl-(2-&gt;8)](n) + n acetyl-CoA = [N,O(9)-diacetyl-alpha-D-neuraminosyl-(2-&gt;8)](n) + n CoA. It carries out the reaction [N-acetyl-alpha-D-neuraminosyl-(2-&gt;8)](n) + n acetyl-CoA = [O(7),N-diacetyl-alpha-D-neuraminosyl-(2-&gt;8)](n) + n CoA. Its function is as follows. Catalyzes the O-acetylation of capsular polymeric sialic acid. Shows high substrate specificity toward polymers of sialic acid that contains a large number of residues. This is Polysialic acid O-acetyltransferase from Escherichia coli O1:K1 / APEC.